A 196-amino-acid chain; its full sequence is Pyridoxine/pyridoxamine 5'-phosphate oxidase (196 aa).

K49 contacts substrate. Residues K66 and Q88 each coordinate FMN. 3 residues coordinate substrate: Y106, R110, and S114. FMN contacts are provided by residues 123 to 124 (QS) and W168. Substrate is bound at residue 174–176 (RLH). FMN is bound at residue R178.

Belongs to the pyridoxamine 5'-phosphate oxidase family. Homodimer. FMN is required as a cofactor.

It catalyses the reaction pyridoxamine 5'-phosphate + O2 + H2O = pyridoxal 5'-phosphate + H2O2 + NH4(+). It carries out the reaction pyridoxine 5'-phosphate + O2 = pyridoxal 5'-phosphate + H2O2. The protein operates within cofactor metabolism; pyridoxal 5'-phosphate salvage; pyridoxal 5'-phosphate from pyridoxamine 5'-phosphate: step 1/1. It participates in cofactor metabolism; pyridoxal 5'-phosphate salvage; pyridoxal 5'-phosphate from pyridoxine 5'-phosphate: step 1/1. Functionally, catalyzes the oxidation of either pyridoxine 5'-phosphate (PNP) or pyridoxamine 5'-phosphate (PMP) into pyridoxal 5'-phosphate (PLP). The chain is Pyridoxine/pyridoxamine 5'-phosphate oxidase from Bdellovibrio bacteriovorus (strain ATCC 15356 / DSM 50701 / NCIMB 9529 / HD100).